The following is a 432-amino-acid chain: G-protein coupled receptor 22 (432 aa).

The Cytoplasmic segment spans residues 1–45; the sequence is MCFSPVLEINMQSESNVTVRDDIEDIDTNMYQPLSYPLSFQVSLT. A helical transmembrane segment spans residues 46–66; that stretch reads GFLMLEIVLGLGSNLTVLVLY. Residues 67 to 85 are Extracellular-facing; the sequence is CMKSNLISSVSNIITMNLH. Residues 86-106 traverse the membrane as a helical segment; sequence VLDVIICVGCIPLTIVILLLS. Over 107–115 the chain is Cytoplasmic; it reads LERNTALIC. A helical transmembrane segment spans residues 116–136; sequence CFHEACVSFASVSTAINVFAI. Residues 137-156 are Extracellular-facing; it reads TLDRYDISVKPANRILTMGR. Residues 157-177 form a helical membrane-spanning segment; it reads AVMLMTSIWIFSFFSFLIPFI. Over 178 to 208 the chain is Cytoplasmic; the sequence is EVNFFSLQSGNAWENKTLLCVSTSEYYTELG. The helical transmembrane segment at 209 to 229 threads the bilayer; it reads MYYHLLVQIPIFFFTVIVMLI. The Extracellular portion of the chain corresponds to 230–314; it reads TYTKILQALN…ERQKRVFKMS (85 aa). A helical transmembrane segment spans residues 315-335; it reads LLIISTFLLCWTPISVLNTTI. Residues 336–348 are Cytoplasmic-facing; the sequence is LCLGPSDLLVKLR. The helical transmembrane segment at 349–369 threads the bilayer; that stretch reads LCFLVMAYGTTIFHPLLYAFT. The Extracellular segment spans residues 370 to 432; the sequence is RQKFQKVLKS…KCLVPQVVTD (63 aa).

The protein belongs to the G-protein coupled receptor 1 family. Abundant levels detected in the brain. High expression in the heart (at protein level). No detectable expression in other peripheral tissues.

The protein resides in the cell membrane. Its function is as follows. Orphan G-protein coupled receptor. Seems to act through a G(i)/G(o) mediated pathway. May be involved in ciliogenesis. The sequence is that of G-protein coupled receptor 22 from Rattus norvegicus (Rat).